A 60-amino-acid polypeptide reads, in one-letter code: Ixodegrin-like peptide (60 aa).

The N-terminal stretch at 1–19 is a signal peptide; the sequence is MNAVFIAALLILGTSTFDA. The short motif at 49 to 51 is the Cell attachment site element; that stretch reads RGD.

It belongs to the ixodegrin family. In terms of processing, contains 3 disulfide bonds. As to expression, expressed in salivary glands.

It localises to the secreted. Its function is as follows. Tick salivary platelet aggregation inhibitor that plays an important part in the anti-hemostatic strategy of ticks. Inhibits platelet aggregation induced by ADP, thrombin and thromboxane A2 (TXA2). Blocks platelet adhesion to soluble collagen (most probably through the binding to alpha-2/beta-1 integrin (ITGA2/ITGB1)) and binds to purified glycoprotein IIb/IIIa (ITGA2B/ITGB3) in a dose-dependent manner. In vivo, reduces thrombus weight effectively in a rat arteriovenous shunt model and inhibits thrombosis in a carrageenan-induced mouse tail thrombosis model. This chain is Ixodegrin-like peptide, found in Ixodes scapularis (Black-legged tick).